The chain runs to 561 residues: Cloacin (561 aa).

Gly residues-rich tracts occupy residues 1 to 21, 29 to 40, and 66 to 91; these read MSGG…GGQA, SGKGGPSSGGGT, and FGNG…GGGQ. Disordered regions lie at residues 1-93, 254-273, 304-326, 432-507, and 530-561; these read MSGG…GQSS, PKGI…TAGG, VKQR…PEEG, KAAL…KRAR, and RASD…KKYL. An involved in the translocation of the protein across the cell membrane region spans residues 1–180; it reads MSGGDGRGPG…DTVTETPAST (180 aa). A responsible for the receptor binding activity region spans residues 200–420; it reads DERQHIAVVA…NAKLKAAQAS (221 aa). Basic and acidic residues-rich tracts occupy residues 306–326 and 440–494; these read QRQE…PEEG and ESRK…EGKP. The interval 421 to 561 is ribonuclease activity; it reads LNAMNDALSR…DPKRNIKKYL (141 aa). A binding of immunity protein region spans residues 540-561; sequence FDPKTGKQVKGPDPKRNIKKYL.

It belongs to the cloacin colicin family.

Functionally, inactivates ribosomes by hydrolyzing 16S RNA in 30S ribosomes at a specific site. In terms of biological role, colicins are polypeptide toxins produced by and active against E.coli and closely related bacteria. The protein is Cloacin (ccl) of Escherichia coli.